The sequence spans 704 residues: Low calcium response locus protein D (704 aa).

7 helical membrane passes run 18–35 (IMLA…VLPL), 42–61 (ILIA…AIYI), 108–132 (FVVG…FLVI), 200–220 (AIAG…IGVT), 235–259 (ILTV…GIIV), 278–297 (VVAQ…LFGL), and 304–320 (VTFL…GYML).

Belongs to the FHIPEP (flagella/HR/invasion proteins export pore) family.

The protein localises to the cell inner membrane. Its function is as follows. Could be involved in the secretion of the yop virulence proteins. The sequence is that of Low calcium response locus protein D (lcrD) from Yersinia pestis.